The chain runs to 365 residues: Protein-glutamate methylesterase/protein-glutamine glutaminase 2 (365 aa).

Residues 6 to 123 (RVLIIDDSAS…ADSLSDDAMR (118 aa)) form the Response regulatory domain. Asp57 is subject to 4-aspartylphosphate. The CheB-type methylesterase domain maps to 173–359 (AKTTEMVVCV…PLDQIAREVL (187 aa)). Catalysis depends on residues Ser185, His211, and Asp307.

It belongs to the CheB family. In terms of processing, phosphorylated by CheA. Phosphorylation of the N-terminal regulatory domain activates the methylesterase activity.

It is found in the cytoplasm. It carries out the reaction [protein]-L-glutamate 5-O-methyl ester + H2O = L-glutamyl-[protein] + methanol + H(+). The enzyme catalyses L-glutaminyl-[protein] + H2O = L-glutamyl-[protein] + NH4(+). Its function is as follows. Involved in chemotaxis. Part of a chemotaxis signal transduction system that modulates chemotaxis in response to various stimuli. Catalyzes the demethylation of specific methylglutamate residues introduced into the chemoreceptors (methyl-accepting chemotaxis proteins or MCP) by CheR. Also mediates the irreversible deamidation of specific glutamine residues to glutamic acid. The sequence is that of Protein-glutamate methylesterase/protein-glutamine glutaminase 2 from Rhizobium johnstonii (strain DSM 114642 / LMG 32736 / 3841) (Rhizobium leguminosarum bv. viciae).